The primary structure comprises 387 residues: Phosphoglycerate kinase (387 aa).

Substrate-binding positions include 21–23, arginine 36, 59–62, arginine 113, and arginine 146; these read DLN and HLGR. Residues lysine 197, glutamate 314, and 340–343 each bind ATP; that span reads GGDT.

It belongs to the phosphoglycerate kinase family. Monomer.

The protein localises to the cytoplasm. The enzyme catalyses (2R)-3-phosphoglycerate + ATP = (2R)-3-phospho-glyceroyl phosphate + ADP. It participates in carbohydrate degradation; glycolysis; pyruvate from D-glyceraldehyde 3-phosphate: step 2/5. This is Phosphoglycerate kinase from Klebsiella pneumoniae (strain 342).